The sequence spans 427 residues: A-kinase anchor protein 5 (427 aa).

The disordered stretch occupies residues 1–122 (METTISEIHV…DADLSKKKAK (122 aa)). The tract at residues 1 to 170 (METTISEIHV…LDIQTQTPLN (170 aa)) is essential to the intracellular anchoring function. Basic and acidic residues predominate over residues 8–19 (IHVENKDEKRSA). Position 22 is a phosphoserine (Ser-22). Cys-36 is lipidated: S-palmitoyl cysteine. Basic residues predominate over residues 37–48 (FKRRKKAAKALK). Positions 76-96 (RGAWASLKRLVTRRKRSESSK) match the AKAP CaM-binding motif. The segment covering 92–102 (SESSKQQKPLE) has biased composition (basic and acidic residues). Cys-129 carries S-palmitoyl cysteine lipidation. Composition is skewed to polar residues over residues 171–182 (DQATKAKSTQDL) and 242–252 (VQPQQASPLET). Disordered stretches follow at residues 171–205 (DQATKAKSTQDLSEGISRKDGDEVCESNVSNSTTS), 239–269 (KQDVQPQQASPLETSETDHQQPVLSDVPPLP), and 281–333 (SNST…EESK). The span at 302 to 333 (EETKPKDTELSQESDFKENGITEEKSKSEESK) shows a compositional bias: basic and acidic residues. The tract at residues 392–405 (LIETASSLVKNAIQ) is PKA-RII subunit binding domain. Residues 410–427 (QLVNEMASDDNKINNLLQ) form a tethers NFATC2 to CRAC channels region.

As to quaternary structure, binding protein for dimer of the RII-beta regulatory subunit of cAMP-dependent protein kinase (PKA) and also for the protein kinase C (PKC) and the phosphatase calcineurin (PP2B). Each enzyme is inhibited when bound to the anchoring protein. Also binds the beta2-adrenergic receptor. Part of a complex containing AKAP5, ADCY5, ADCY6 and PDE4C. Interacts with ADCY8, and enhances its phosphorylation at lipid rafts. Interacts with ORAI1 (isoform alpha) (via N-terminus) upon store depletion and in response to LTC4. Does not interact with ORAI2 and ORAI3 paralogs. Interacts (via leucine zipper domain) with NFATC2/NFAT1. Interacts with calmodulin; the interaction is calcium-independent. Interacts with KCNQ2; the interaction may help KCNQ2 channel complex to retain calcium-bound calmodulin. Interacts with KCNK2; the channel is recruited to postsynaptic microdomains by AKAP5 where it can integrate neurotransmitter receptor signals. Part of a complex composed of AKAP5 and ADRB2. Palmitoylated. Palmitoylation at Cys-36 and Cys-129 play a key role in the targeting of AKAP5 to lipid rafts. Palmitoylation by ZDHHC2 is required for AKAP5 function in LTP-stimulated recycling endosome exocytosis. As to expression, predominantly in the cerebral cortex and the postsynaptic densities of the forebrain, and to a lesser extent in adrenal medulla, lung and anterior pituitary.

It localises to the postsynaptic recycling endosome membrane. The protein resides in the cell projection. It is found in the dendrite. Its subcellular location is the postsynaptic cell membrane. Its function is as follows. Multivalent scaffold protein that anchors the cAMP-dependent protein kinase/PKA to cytoskeletal and/or organelle-associated proteins, targeting the signal carried by cAMP to specific intracellular effectors. Association with the beta2-adrenergic receptor (beta2-AR) not only regulates beta2-AR signaling pathway, but also the activation by PKA by switching off the beta2-AR signaling cascade. Plays a role in long term synaptic potentiation by regulating protein trafficking from the dendritic recycling endosomes to the plasma membrane and controlling both structural and functional plasticity at excitatory synapses. In hippocampal pyramidal neurons, recruits KCNK2/TREK-1 channel at postsynaptic dense bodies microdomains and converts it to a leak channel no longer sensitive to stimulation by arachidonic acid, acidic pH or mechanical stress, nor inhibited by Gq-coupled receptors but still under the negative control of Gs-coupled receptors. Associates with ORAI1 pore-forming subunit of CRAC channels in Ca(2+) signaling microdomains where it recruits NFATC2/NFAT1 and couples store-operated Ca(2+) influx to calmodulin and calcineurin signaling and activation of NFAT-dependent transcriptional responses. This chain is A-kinase anchor protein 5 (AKAP5), found in Homo sapiens (Human).